The following is a 191-amino-acid chain: ATP synthase subunit b 1 (191 aa).

A helical membrane pass occupies residues 7–25 (RMRILCLCATTLLMAGSAL).

This sequence belongs to the ATPase B chain family. F-type ATPases have 2 components, F(1) - the catalytic core - and F(0) - the membrane proton channel. F(1) has five subunits: alpha(3), beta(3), gamma(1), delta(1), epsilon(1). F(0) has three main subunits: a(1), b(2) and c(10-14). The alpha and beta chains form an alternating ring which encloses part of the gamma chain. F(1) is attached to F(0) by a central stalk formed by the gamma and epsilon chains, while a peripheral stalk is formed by the delta and b chains.

The protein resides in the cell inner membrane. In terms of biological role, f(1)F(0) ATP synthase produces ATP from ADP in the presence of a proton or sodium gradient. F-type ATPases consist of two structural domains, F(1) containing the extramembraneous catalytic core and F(0) containing the membrane proton channel, linked together by a central stalk and a peripheral stalk. During catalysis, ATP synthesis in the catalytic domain of F(1) is coupled via a rotary mechanism of the central stalk subunits to proton translocation. Component of the F(0) channel, it forms part of the peripheral stalk, linking F(1) to F(0). The sequence is that of ATP synthase subunit b 1 from Syntrophotalea carbinolica (strain DSM 2380 / NBRC 103641 / GraBd1) (Pelobacter carbinolicus).